The following is a 424-amino-acid chain: Adenylosuccinate synthetase (424 aa).

GTP contacts are provided by residues 12–18 and 40–42; these read GDEGKGK and GHT. The active-site Proton acceptor is the Asp13. Positions 13 and 40 each coordinate Mg(2+). Residues 13 to 16, 38 to 41, Thr130, Arg144, Asn220, Thr235, and Arg299 each bind IMP; these read DEGK and NAGH. His41 functions as the Proton donor in the catalytic mechanism. 295–301 is a binding site for substrate; sequence VTTGRRR. GTP-binding positions include Arg301, 327–329, and 412–414; these read KLD and GTG.

The protein belongs to the adenylosuccinate synthetase family. Homodimer. It depends on Mg(2+) as a cofactor.

It is found in the cytoplasm. It catalyses the reaction IMP + L-aspartate + GTP = N(6)-(1,2-dicarboxyethyl)-AMP + GDP + phosphate + 2 H(+). It functions in the pathway purine metabolism; AMP biosynthesis via de novo pathway; AMP from IMP: step 1/2. Functionally, plays an important role in the de novo pathway and in the salvage pathway of purine nucleotide biosynthesis. Catalyzes the first committed step in the biosynthesis of AMP from IMP. This chain is Adenylosuccinate synthetase, found in Aspergillus flavus (strain ATCC 200026 / FGSC A1120 / IAM 13836 / NRRL 3357 / JCM 12722 / SRRC 167).